Here is a 907-residue protein sequence, read N- to C-terminus: Valine--tRNA ligase (907 aa).

Residues 45–55 (PNVTGSLHMGH) carry the 'HIGH' region motif. A 'KMSKS' region motif is present at residues 554–558 (KMSKS). Residue Lys-557 participates in ATP binding. Residues 838-870 (GQLIDLEAERARLVKNVSKIEQDIEKISVKLNN) adopt a coiled-coil conformation.

This sequence belongs to the class-I aminoacyl-tRNA synthetase family. ValS type 1 subfamily. In terms of assembly, monomer.

It localises to the cytoplasm. The catalysed reaction is tRNA(Val) + L-valine + ATP = L-valyl-tRNA(Val) + AMP + diphosphate. In terms of biological role, catalyzes the attachment of valine to tRNA(Val). As ValRS can inadvertently accommodate and process structurally similar amino acids such as threonine, to avoid such errors, it has a 'posttransfer' editing activity that hydrolyzes mischarged Thr-tRNA(Val) in a tRNA-dependent manner. This chain is Valine--tRNA ligase, found in Bartonella quintana (strain Toulouse) (Rochalimaea quintana).